Reading from the N-terminus, the 710-residue chain is Homeobox-leucine zipper protein ROC8 (710 aa).

The segment at Met1–Thr23 is disordered. Residues Arg14 to Thr23 are compositionally biased toward basic residues. The segment at residues Arg15 to His74 is a DNA-binding region (homeobox). Residues Leu82–Tyr144 are a coiled coil. Residues Ser197–Ser440 enclose the START domain. The span at Arg630 to Ala648 shows a compositional bias: low complexity. The segment at Arg630 to Gly650 is disordered.

Belongs to the HD-ZIP homeobox family. Class IV subfamily.

Its subcellular location is the nucleus. In terms of biological role, probable transcription factor. The protein is Homeobox-leucine zipper protein ROC8 (ROC8) of Oryza sativa subsp. japonica (Rice).